The chain runs to 155 residues: Deoxyuridine 5'-triphosphate nucleotidohydrolase (155 aa).

Residues 74–76 (RSG), asparagine 87, and 91–93 (TID) each bind substrate.

It belongs to the dUTPase family. Mg(2+) serves as cofactor.

It catalyses the reaction dUTP + H2O = dUMP + diphosphate + H(+). It functions in the pathway pyrimidine metabolism; dUMP biosynthesis; dUMP from dCTP (dUTP route): step 2/2. This enzyme is involved in nucleotide metabolism: it produces dUMP, the immediate precursor of thymidine nucleotides and it decreases the intracellular concentration of dUTP so that uracil cannot be incorporated into DNA. This Dinoroseobacter shibae (strain DSM 16493 / NCIMB 14021 / DFL 12) protein is Deoxyuridine 5'-triphosphate nucleotidohydrolase.